Reading from the N-terminus, the 751-residue chain is Cytosolic neutral trehalase (751 aa).

Residues 1 to 10 show a composition bias toward polar residues; sequence MSQVNTSQGP. The interval 1–59 is disordered; it reads MSQVNTSQGPVAQGRQRRLSSLSEFNDPFSNAEVYYGPPTDPRKQKQAKPAKINRTRTM. Ser-2 carries the N-acetylserine modification. Ser-20 and Ser-21 each carry phosphoserine; by PKA. Ser-23 is modified (phosphoserine). Basic residues predominate over residues 45-55; it reads QKQAKPAKINR. At Thr-58 the chain carries Phosphothreonine. A Phosphoserine; by PKA modification is found at Ser-60. Ser-66 carries the post-translational modification Phosphoserine. Positions 73 to 92 are disordered; it reads FGKLQQTRRGSEDDTYSSSQ. Ser-83 carries the post-translational modification Phosphoserine; by PKA. Positions 114, 116, 118, 120, and 125 each coordinate Ca(2+). Residues Arg-302, 309–310, Asn-346, 355–357, Glu-424, Arg-473, and Gly-476 contribute to the substrate site; these read WD and RSQ. Residues Asp-478 and Glu-674 each act as proton donor/acceptor in the active site.

This sequence belongs to the glycosyl hydrolase 37 family. As to quaternary structure, monomer. Interacts with BMH1 dimers; the interaction is direct and activates NTH1. Interacts with BMH2. Ca(2+) is required as a cofactor. Phosphorylated by protein kinase A (PKA); phosphorylation at Ser-60 and Ser-83 is required for activation by the 14-3-3 proteins BMH1 and BMH2.

Its subcellular location is the cytoplasm. The catalysed reaction is alpha,alpha-trehalose + H2O = alpha-D-glucose + beta-D-glucose. It participates in carbohydrate degradation. Activated by calcium. Activated by protein kinase A (PKA)-mediated phosphorylation. Its function is as follows. Hydrolyzes intracellular trehalose to glucose. The disaccharide trehalose serves as a storage carbohydrate that is mobilized during nutrient stress. Regulates the level of trehalose as a protectant for cell integrity during heat stress. The sequence is that of Cytosolic neutral trehalase from Saccharomyces cerevisiae (strain ATCC 204508 / S288c) (Baker's yeast).